A 3707-amino-acid chain; its full sequence is CUB and sushi domain-containing protein 3 (3707 aa).

Positions 1 to 21 (MKGIRKGESRAKESKPWEPGK) are disordered. At 1–42 (MKGIRKGESRAKESKPWEPGKRRCAKCGRLDFILMKKMGIKS) the chain is on the cytoplasmic side. A helical transmembrane segment spans residues 43–63 (GFTFWNLVFLLTVSCVKGFIY). The Extracellular segment spans residues 64 to 3630 (TCGGTLKGLN…NQPHGTNSSS (3567 aa)). Intrachain disulfides connect Cys65–Cys91, Cys178–Cys218, Cys204–Cys235, and Cys241–Cys267. The region spanning 65 to 173 (CGGTLKGLNG…HGFKVYYEEL (109 aa)) is the CUB 1 domain. Residues Asn73 and Asn90 are each glycosylated (N-linked (GlcNAc...) asparagine). Residues 176-237 (SSCGNPGVPP…WDFPVPICRA (62 aa)) form the Sushi 1 domain. The CUB 2 domain occupies 241–345 (CGGTMRGSSG…RGFSAPYQGS (105 aa)). N-linked (GlcNAc...) asparagine glycans are attached at residues Asn361 and Asn409. Positions 394-435 (QRVQVTSLRNSGLDPNTSKDGLSPHPADTQSTRRRPRHAEQI) are disordered. The segment covering 396 to 413 (VQVTSLRNSGLDPNTSKD) has biased composition (polar residues). In terms of domain architecture, Sushi 2 spans 484–545 (NLCPDPGEPE…WSDHRPVCKV (62 aa)). 6 disulfide bridges follow: Cys486-Cys526, Cys512-Cys543, Cys548-Cys574, Cys664-Cys704, Cys690-Cys717, and Cys721-Cys747. The 112-residue stretch at 548–659 (CGSNLQGPSG…VGFKVNYKEI (112 aa)) folds into the CUB 3 domain. The region spanning 662–719 (ESCGDPGTPLYGIREGDGFSNRDVLRFECQFGFELIGEKSIVCQENNQWSANIPICIF) is the Sushi 3 domain. A CUB 4 domain is found at 721 to 829 (CLSNFTAPMG…RGFNITYNTF (109 aa)). N-linked (GlcNAc...) asparagine glycosylation is found at Asn724 and Asn823. The Sushi 4 domain occupies 832 to 893 (NECPDPGIPI…WSGLIPKCGA (62 aa)). Cystine bridges form between Cys834–Cys875, Cys860–Cys891, and Cys895–Cys921. Residues 895–1003 (CGGHFSAPSG…NGFKIHYESV (109 aa)) enclose the CUB 5 domain. Residue Asn966 is glycosylated (N-linked (GlcNAc...) asparagine). In terms of domain architecture, Sushi 5 spans 1008 to 1065 (YSCLDPGIPVHGRRYGHDFSIGSTVSFSCDSGYRLSHEEPLLCEKNHWWSHPLPTCDA). 3 cysteine pairs are disulfide-bonded: Cys1010–Cys1050, Cys1036–Cys1063, and Cys1067–Cys1093. Residues 1067–1177 (CGGDVRGPSG…EGFNITFSEY (111 aa)) form the CUB 6 domain. Residues Asn1092, Asn1126, and Asn1171 are each glycosylated (N-linked (GlcNAc...) asparagine). Positions 1180–1239 (EPCEDPGIPQYGSRIGFNFGIGDTLTFSCSSGYRLEGTSEIICLGGGRRVWSAPLPRCVA) constitute a Sushi 6 domain. 3 cysteine pairs are disulfide-bonded: Cys1182/Cys1222, Cys1208/Cys1237, and Cys1241/Cys1267. One can recognise a CUB 7 domain in the interval 1241 to 1349 (CGASATNNEG…EGFQLVYTSF (109 aa)). Residue Asn1280 is glycosylated (N-linked (GlcNAc...) asparagine). In terms of domain architecture, Sushi 7 spans 1352–1412 (SHCEDPGIPQ…WDYPLPSCIA (61 aa)). 12 disulfides stabilise this stretch: Cys1354–Cys1395, Cys1381–Cys1410, Cys1414–Cys1441, Cys1528–Cys1568, Cys1554–Cys1584, Cys1588–Cys1614, Cys1701–Cys1741, Cys1727–Cys1758, Cys1762–Cys1788, Cys1878–Cys1918, Cys1904–Cys1935, and Cys1939–Cys1965. The CUB 8 domain maps to 1414–1523 (CGGRFKGESS…SGFAIQFSSS (110 aa)). One can recognise a Sushi 8 domain in the interval 1526-1586 (TACRDPGVPM…WQPSPPVCIA (61 aa)). N-linked (GlcNAc...) asparagine glycosylation is present at Asn1536. Positions 1588–1696 (CGGNLTGSSG…TGFHLEYKAK (109 aa)) constitute a CUB 9 domain. N-linked (GlcNAc...) asparagine glycosylation is found at Asn1591 and Asn1709. Residues 1699-1760 (ESCFDPGNIM…WNRALPSCHA (62 aa)) enclose the Sushi 9 domain. The CUB 10 domain occupies 1762-1870 (CGSRSTGSEG…KGFHFVYQAV (109 aa)). N-linked (GlcNAc...) asparagine glycosylation is present at Asn1781. Residues 1876–1937 (TQCSSVPEPR…WNDSLPTCIV (62 aa)) enclose the Sushi 10 domain. An N-linked (GlcNAc...) asparagine glycan is attached at Asn1929. The region spanning 1939–2047 (CGGILTKRKG…AGFHLEYTAI (109 aa)) is the CUB 11 domain. An N-linked (GlcNAc...) asparagine glycan is attached at Asn2019. The Sushi 11 domain occupies 2050 to 2109 (DSCPEPQTPSSGIKIGDRYMVGDVVSFQCDQGYSLQGHSHITCMPGPVRRWNYPIPICLA). Disulfide bonds link Cys2052–Cys2092, Cys2078–Cys2107, and Cys2111–Cys2137. The CUB 12 domain occupies 2111 to 2219 (CGGAMSDFSG…QGFHIVYQAY (109 aa)). Asn2155 carries an N-linked (GlcNAc...) asparagine glycan. Positions 2222–2281 (QSCPDPRPFRNGFVIGNDFTVGQTISFECFPGYTLIGNSALTCLHGVSRNWNHPLPRCEA) constitute a Sushi 12 domain. 3 disulfide bridges follow: Cys2224–Cys2264, Cys2250–Cys2279, and Cys2283–Cys2309. The 112-residue stretch at 2283-2394 (CGGNITAMNG…LSYHAYQLRV (112 aa)) folds into the CUB 13 domain. Residues Asn2286, Asn2291, and Asn2324 are each glycosylated (N-linked (GlcNAc...) asparagine). The Sushi 13 domain occupies 2393–2454 (RVCQPPPPVP…MDGAPPVCQV (62 aa)). 3 cysteine pairs are disulfide-bonded: Cys2395–Cys2437, Cys2423–Cys2452, and Cys2456–Cys2484. The CUB 14 domain maps to 2456 to 2567 (CPANELRLDS…KGFRIRYIAF (112 aa)). N-linked (GlcNAc...) asparagine glycosylation is found at Asn2495 and Asn2537. Sushi domains lie at 2567 to 2629 (FYCS…ACQA), 2630 to 2691 (ISCG…RCVV), 2692 to 2756 (VTCP…YCQI), 2757 to 2814 (ISCG…RCLA), 2815 to 2872 (GHCG…SCVP), 2873 to 2930 (VSCG…MCKV), 2931 to 2992 (VNCS…ECIM), 2993 to 3050 (IDCG…HCSG), 3054 to 3111 (GTCG…ECKA), 3112 to 3170 (VQCG…NCTI), 3171 to 3230 (ISCG…TCRA), 3231 to 3288 (VTCP…QCLP), 3289 to 3346 (KFCG…HCIE), 3350 to 3408 (TSCE…ECIP), and 3409 to 3468 (HSCK…ICEA). Intrachain disulfides connect Cys2569-Cys2610, Cys2596-Cys2627, Cys2632-Cys2674, Cys2658-Cys2689, Cys2694-Cys2739, Cys2725-Cys2754, Cys2759-Cys2799, Cys2785-Cys2812, Cys2817-Cys2857, Cys2843-Cys2870, Cys2875-Cys2915, and Cys2901-Cys2928. N-linked (GlcNAc...) asparagine glycans are attached at residues Asn2711 and Asn2742. Residue Asn2862 is glycosylated (N-linked (GlcNAc...) asparagine). N-linked (GlcNAc...) asparagine glycans are attached at residues Asn2932 and Asn2952. 18 cysteine pairs are disulfide-bonded: Cys2933-Cys2977, Cys2963-Cys2990, Cys2995-Cys3035, Cys3021-Cys3048, Cys3056-Cys3096, Cys3082-Cys3109, Cys3114-Cys3155, Cys3141-Cys3168, Cys3173-Cys3215, Cys3199-Cys3228, Cys3233-Cys3273, Cys3259-Cys3286, Cys3291-Cys3331, Cys3317-Cys3344, Cys3352-Cys3393, Cys3379-Cys3406, Cys3411-Cys3453, and Cys3438-Cys3466. Asn3099 carries an N-linked (GlcNAc...) asparagine glycan. N-linked (GlcNAc...) asparagine glycosylation is found at Asn3158, Asn3167, Asn3194, Asn3208, and Asn3218. N-linked (GlcNAc...) asparagine glycosylation is present at Asn3276. An N-linked (GlcNAc...) asparagine glycan is attached at Asn3364. N-linked (GlcNAc...) asparagine glycans are attached at residues Asn3522, Asn3529, Asn3612, Asn3618, and Asn3627. A helical membrane pass occupies residues 3631 to 3651 (VAIAILVPFFALIFAGFGFYL). Topologically, residues 3652–3707 (YKQRTAPKTQYTGCSVHENNNGQAAFENPMYDTNAKSVEGKAVRFDPNLNTVCTMV) are cytoplasmic.

The protein belongs to the CSMD family. In terms of tissue distribution, weakly expressed in most tissues, except in brain. Expressed at intermediate level in brain, including cerebellum, substantia nigra, thalamus, spinal cord, hippocampus and fetal brain. Also expressed in testis.

It is found in the cell membrane. In terms of biological role, involved in dendrite development. This chain is CUB and sushi domain-containing protein 3 (CSMD3), found in Homo sapiens (Human).